The primary structure comprises 243 residues: Small ribosomal subunit protein uS5 (243 aa).

Positions 1–54 are disordered; it reads MSDNEKETQVAEETQNTQATAESSNNDERRGRRNNRGGEGRRGDRRGRREDNHE. A compositionally biased stretch (polar residues) spans 11–24; it reads AEETQNTQATAESS. The span at 26–54 shows a compositional bias: basic and acidic residues; that stretch reads NDERRGRRNNRGGEGRRGDRRGRREDNHE. The S5 DRBM domain maps to 57 to 120; sequence MLDRVVTINR…LDAKKHLFNV (64 aa).

The protein belongs to the universal ribosomal protein uS5 family. As to quaternary structure, part of the 30S ribosomal subunit. Contacts proteins S4 and S8.

Its function is as follows. With S4 and S12 plays an important role in translational accuracy. Located at the back of the 30S subunit body where it stabilizes the conformation of the head with respect to the body. The polypeptide is Small ribosomal subunit protein uS5 (Bifidobacterium animalis subsp. lactis (strain AD011)).